Consider the following 424-residue polypeptide: Enolase (424 aa).

Glutamine 165 serves as a coordination point for (2R)-2-phosphoglycerate. Glutamate 207 functions as the Proton donor in the catalytic mechanism. Residues aspartate 244, glutamate 283, and aspartate 310 each contribute to the Mg(2+) site. (2R)-2-phosphoglycerate contacts are provided by lysine 335, arginine 364, serine 365, and lysine 386. Lysine 335 acts as the Proton acceptor in catalysis.

It belongs to the enolase family. It depends on Mg(2+) as a cofactor.

Its subcellular location is the cytoplasm. It is found in the secreted. The protein localises to the cell surface. The enzyme catalyses (2R)-2-phosphoglycerate = phosphoenolpyruvate + H2O. The protein operates within carbohydrate degradation; glycolysis; pyruvate from D-glyceraldehyde 3-phosphate: step 4/5. Functionally, catalyzes the reversible conversion of 2-phosphoglycerate (2-PG) into phosphoenolpyruvate (PEP). It is essential for the degradation of carbohydrates via glycolysis. This Chlamydia abortus (strain DSM 27085 / S26/3) (Chlamydophila abortus) protein is Enolase.